The following is a 290-amino-acid chain: S-methyl-5'-thioadenosine phosphorylase 2 (290 aa).

Residues Ser-14, 57–58 (RH), and 90–91 (SA) contribute to the phosphate site. A substrate-binding site is contributed by Met-185. Ser-186 is a binding site for phosphate. Position 209–211 (209–211 (DYD)) interacts with substrate.

Belongs to the PNP/MTAP phosphorylase family. MTAP subfamily. As to quaternary structure, homotrimer.

It is found in the cytoplasm. The protein localises to the nucleus. It carries out the reaction S-methyl-5'-thioadenosine + phosphate = 5-(methylsulfanyl)-alpha-D-ribose 1-phosphate + adenine. The protein operates within amino-acid biosynthesis; L-methionine biosynthesis via salvage pathway; S-methyl-5-thio-alpha-D-ribose 1-phosphate from S-methyl-5'-thioadenosine (phosphorylase route): step 1/1. Functionally, catalyzes the reversible phosphorylation of S-methyl-5'-thioadenosine (MTA) to adenine and 5-methylthioribose-1-phosphate. Involved in the breakdown of MTA, a major by-product of polyamine biosynthesis. Responsible for the first step in the methionine salvage pathway after MTA has been generated from S-adenosylmethionine. Has broad substrate specificity with 6-aminopurine nucleosides as preferred substrates. This chain is S-methyl-5'-thioadenosine phosphorylase 2, found in Puccinia graminis f. sp. tritici (strain CRL 75-36-700-3 / race SCCL) (Black stem rust fungus).